A 193-amino-acid chain; its full sequence is Ion-translocating oxidoreductase complex subunit A (193 aa).

The next 6 helical transmembrane spans lie at 5–25 (LLLLVGTVLVNNFVLVKFLGL), 39–59 (MGMGLATTFVLTLASVCAWAV), 62–82 (FILVPLGLAYLRTLTFILVIA), 102–122 (LLGIFLPLITTNCAVLGVALL), 134–154 (AVYGFSAAVGFSLVMVLFAAI), and 171–191 (SIALITAGLMSLAFMGFSGLV).

This sequence belongs to the NqrDE/RnfAE family. As to quaternary structure, the complex is composed of six subunits: RnfA, RnfB, RnfC, RnfD, RnfE and RnfG.

Its subcellular location is the cell inner membrane. Its function is as follows. Part of a membrane-bound complex that couples electron transfer with translocation of ions across the membrane. The sequence is that of Ion-translocating oxidoreductase complex subunit A from Edwardsiella ictaluri (strain 93-146).